The sequence spans 117 residues: Hydrogenase maturation factor HypA (117 aa).

Residue H2 participates in Ni(2+) binding. Zn(2+)-binding residues include C73, C76, C89, and C92.

It belongs to the HypA/HybF family.

Functionally, involved in the maturation of [NiFe] hydrogenases. Required for nickel insertion into the metal center of the hydrogenase. The chain is Hydrogenase maturation factor HypA from Shewanella baltica (strain OS185).